A 271-amino-acid chain; its full sequence is Undecaprenyl-diphosphatase (271 aa).

The next 8 membrane-spanning stretches (helical) occupy residues 5–25 (LLIKAFIMGIVEGLTEFLPIS), 43–63 (FATMFEIVIQLGAILAVVYYF), 80–100 (GFNLWYKTFIAFLPAAIIGIL), 109–129 (LFSPFTVAIALIVGAIMMIVI), 145–165 (VSTSKAFWIGVAQVMSLFPGM), 186–206 (AEFSFFLAIPTMLAATGFELV), 215–235 (LEWEALAVGFIMSFITALIVV), and 246–266 (VLKPFAYYRLLVGVLMLFLIA).

Belongs to the UppP family.

Its subcellular location is the cell membrane. The catalysed reaction is di-trans,octa-cis-undecaprenyl diphosphate + H2O = di-trans,octa-cis-undecaprenyl phosphate + phosphate + H(+). In terms of biological role, catalyzes the dephosphorylation of undecaprenyl diphosphate (UPP). Confers resistance to bacitracin. This is Undecaprenyl-diphosphatase from Caldanaerobacter subterraneus subsp. tengcongensis (strain DSM 15242 / JCM 11007 / NBRC 100824 / MB4) (Thermoanaerobacter tengcongensis).